Here is a 258-residue protein sequence, read N- to C-terminus: uncharacterized protein (258 aa).

Over residues 40 to 54 (AQKTDTPLDSSSYAV) the composition is skewed to polar residues. The disordered stretch occupies residues 40-63 (AQKTDTPLDSSSYAVTSPEEAPNE).

This is an uncharacterized protein from Treponema pallidum (strain Nichols).